A 455-amino-acid polypeptide reads, in one-letter code: Ribulose bisphosphate carboxylase large chain (455 aa).

An N6,N6,N6-trimethyllysine modification is found at Lys-5. Positions 114 and 164 each coordinate substrate. Lys-166 (proton acceptor) is an active-site residue. Lys-168 contributes to the substrate binding site. Mg(2+)-binding residues include Lys-192, Asp-194, and Glu-195. The residue at position 192 (Lys-192) is an N6-carboxylysine. His-285 functions as the Proton acceptor in the catalytic mechanism. Positions 286, 318, and 370 each coordinate substrate.

Belongs to the RuBisCO large chain family. Type I subfamily. Heterohexadecamer of 8 large chains and 8 small chains; disulfide-linked. The disulfide link is formed within the large subunit homodimers. The cofactor is Mg(2+). The disulfide bond which can form in the large chain dimeric partners within the hexadecamer appears to be associated with oxidative stress and protein turnover.

The protein resides in the plastid. The protein localises to the chloroplast. It catalyses the reaction 2 (2R)-3-phosphoglycerate + 2 H(+) = D-ribulose 1,5-bisphosphate + CO2 + H2O. The catalysed reaction is D-ribulose 1,5-bisphosphate + O2 = 2-phosphoglycolate + (2R)-3-phosphoglycerate + 2 H(+). Its function is as follows. RuBisCO catalyzes two reactions: the carboxylation of D-ribulose 1,5-bisphosphate, the primary event in carbon dioxide fixation, as well as the oxidative fragmentation of the pentose substrate in the photorespiration process. Both reactions occur simultaneously and in competition at the same active site. This is Ribulose bisphosphate carboxylase large chain from Vachellia farnesiana (Sweet acacia).